A 426-amino-acid polypeptide reads, in one-letter code: Histidine--tRNA ligase (426 aa).

The protein belongs to the class-II aminoacyl-tRNA synthetase family. Homodimer.

It localises to the cytoplasm. The enzyme catalyses tRNA(His) + L-histidine + ATP = L-histidyl-tRNA(His) + AMP + diphosphate + H(+). The protein is Histidine--tRNA ligase of Streptococcus pyogenes serotype M1.